Here is a 117-residue protein sequence, read N- to C-terminus: Large ribosomal subunit protein uL18 (117 aa).

The protein belongs to the universal ribosomal protein uL18 family. As to quaternary structure, part of the 50S ribosomal subunit; part of the 5S rRNA/L5/L18/L25 subcomplex. Contacts the 5S and 23S rRNAs.

Functionally, this is one of the proteins that bind and probably mediate the attachment of the 5S RNA into the large ribosomal subunit, where it forms part of the central protuberance. The chain is Large ribosomal subunit protein uL18 from Thioalkalivibrio sulfidiphilus (strain HL-EbGR7).